We begin with the raw amino-acid sequence, 218 residues long: uncharacterized protein (218 aa).

Residues 1 to 28 (MLSLQCLPPFFISVPNRSTNSCSTAPLR) constitute a chloroplast transit peptide.

Belongs to the SixA phosphatase family.

Its subcellular location is the plastid. It is found in the chloroplast. This is an uncharacterized protein from Arabidopsis thaliana (Mouse-ear cress).